The chain runs to 326 residues: ELAV-like protein 1 (326 aa).

Residue Ser2 is modified to N-acetylserine. Ser2 carries the phosphoserine modification. The RRM 1 domain occupies 20-98; that stretch reads TNLIVNYLPQ…KTIKVSYARP (79 aa). Ser100 and Ser158 each carry phosphoserine. Residues 106 to 186 enclose the RRM 2 domain; that stretch reads ANLYISGLPR…EPITVKFAAN (81 aa). Lys191 is covalently cross-linked (Glycyl lysine isopeptide (Lys-Gly) (interchain with G-Cter in SUMO2)). A phosphoserine mark is found at Ser197 and Ser202. Arg206 carries the post-translational modification Omega-N-methylarginine. At Arg217 the chain carries Asymmetric dimethylarginine; by CARM1; alternate. Arg217 is modified (omega-N-methylarginine; alternate). Phosphoserine occurs at positions 221 and 318. An RRM 3 domain is found at 244 to 322; the sequence is WCIFIYNLGQ…KILQVSFKTN (79 aa).

It belongs to the RRM elav family. Monomer and homodimer (in vitro). Interacts with ANP32A. Interacts with ZNF385A; the interaction is indirect and mRNA-dependent and may regulate p53/TP53 expression. Identified in a mRNP complex, at least composed of DHX9, DDX3X, ELAVL1, HNRNPU, IGF2BP1, ILF3, PABPC1, PCBP2, PTBP2, STAU1, STAU2, SYNCRIP and YBX1. Interacts with AGO1 and AGO2. Interacts with IGF2BP1; the interaction is enhanced by SEPIN14P20 peptide RBPR. Interacts with IGF2BP2 and IGF2BP3. Interacts with HNRNPL. Interacts with DHX36; this interaction occurs in a RNA-dependent manner. Interacts with ILF3; this interaction occurs in a RNA-dependent manner. Interacts with PLEKHN1. Interacts with SHFL; the interaction increases in presence of RNA. Interacts with YBX1; interaction recruits ELAVL1 on C5-methylcytosine (m5C)-containing mRNAs, thereby promoting mRNA stability. Interacts with FXR1. Phosphorylated by MAPKAPK2. Phosphorylated by PRKCD. Post-translationally, methylated at Arg-217 by CARM1 in macrophages in response to LPS challenge. Ubiquitous. Detected in brain, liver, thymus and muscle.

The protein localises to the cytoplasm. It localises to the nucleus. Its subcellular location is the stress granule. It is found in the P-body. Its function is as follows. RNA-binding protein that binds to the 3'-UTR region of mRNAs and increases their stability. Involved in embryonic stem cell (ESC) differentiation: preferentially binds mRNAs that are not methylated by N6-methyladenosine (m6A), stabilizing them, promoting ESC differentiation. Has also been shown to be capable of binding to m6A-containing mRNAs and contributes to MYC stability by binding to m6A-containing MYC mRNAs. Binds to poly-U elements and AU-rich elements (AREs) in the 3'-UTR of target mRNAs. Binds avidly to the AU-rich element in FOS and IL3/interleukin-3 mRNAs. In the case of the FOS AU-rich element, binds to a core element of 27 nucleotides that contain AUUUA, AUUUUA, and AUUUUUA motifs. Binds preferentially to the 5'-UUUU[AG]UUU-3' motif in vitro. With ZNF385A, binds the 3'-UTR of p53/TP53 mRNA to control their nuclear export induced by CDKN2A. Hence, may regulate p53/TP53 expression and mediate in part the CDKN2A anti-proliferative activity. May also bind with ZNF385A the CCNB1 mRNA. Increases the stability of the leptin mRNA harboring an AU-rich element (ARE) in its 3' UTR. This Homo sapiens (Human) protein is ELAV-like protein 1 (ELAVL1).